A 541-amino-acid polypeptide reads, in one-letter code: Zinc finger protein 329 (541 aa).

Ser50 carries the phosphoserine modification. 12 C2H2-type zinc fingers span residues 203-225, 231-253, 259-281, 287-309, 315-337, 343-365, 371-393, 399-421, 427-449, 455-477, 483-505, and 511-533; these read YRCTECGKCFKRNSSLVLHHRTH, YTCNECGKSFSKNYNLIVHQRIH, YECSKCGKAFSDGSALTQHQRIH, YECLECGKTFNRNSSLILHQRTH, YRCNECGKPFTDISHLTVHLRIH, YECSKCGKAFRDGSYLTQHERTH, FECAECGKSFNRNSHLIVHQKIH, YECKECGKTFIESAYLIRHQRIH, YGCNQCQKLFRNIAGLIRHQRTH, YECNQCGKAFRDSSCLTKHQRIH, YQCPECGKSFKQNSHLAVHQRLH, and SRCPQCGKMFQKSSSLVRHQRAH.

This sequence belongs to the krueppel C2H2-type zinc-finger protein family.

The protein resides in the nucleus. May be involved in transcriptional regulation. This chain is Zinc finger protein 329 (ZNF329), found in Homo sapiens (Human).